Reading from the N-terminus, the 386-residue chain is Probable magnesium transporter NIPA5 (386 aa).

Over M1–D18 the chain is Extracellular. A helical membrane pass occupies residues N19 to V39. Topologically, residues K40–Y61 are cytoplasmic. 2 helical membrane-spanning segments follow: residues L62–F82 and A83–I103. The Cytoplasmic portion of the chain corresponds to S104–K115. A helical membrane pass occupies residues L116–L136. Topologically, residues H137–P157 are extracellular. The chain crosses the membrane as a helical span at residues A158–I178. Residues P179–Y189 are Cytoplasmic-facing. The chain crosses the membrane as a helical span at residues I190–A210. Topologically, residues L211–Q220 are extracellular. Residues L221–M241 traverse the membrane as a helical segment. The Cytoplasmic portion of the chain corresponds to N242–V255. The helical transmembrane segment at V256–F276 threads the bilayer. At K277–S283 the chain is on the extracellular side. Residues G284–L304 traverse the membrane as a helical segment. The Cytoplasmic portion of the chain corresponds to H305 to S386. Residues R352–S386 form a disordered region. Residues P376–S386 are compositionally biased toward basic and acidic residues.

This sequence belongs to the NIPA (TC 2.A.7) family. Homodimer.

It is found in the cell membrane. It localises to the early endosome. Acts as a Mg(2+) transporter. Can also transport other divalent cations such as Fe(2+), Sr(2+), Ba(2+), Mn(2+) and Co(2+) but to a much less extent than Mg(2+). This chain is Probable magnesium transporter NIPA5, found in Arabidopsis thaliana (Mouse-ear cress).